The following is a 381-amino-acid chain: Dual-specificity RNA methyltransferase RlmN (381 aa).

Catalysis depends on glutamate 86, which acts as the Proton acceptor. The Radical SAM core domain occupies 105–338 (RHARYTICVS…CTIRQSKGLD (234 aa)). A disulfide bond links cysteine 112 and cysteine 343. [4Fe-4S] cluster is bound by residues cysteine 119, cysteine 123, and cysteine 126. S-adenosyl-L-methionine contacts are provided by residues 169–170 (GE), serine 201, 224–226 (SLH), and asparagine 300. The S-methylcysteine intermediate role is filled by cysteine 343. The interval 351–381 (ENPKFRANVSGNSAAKTEEKPTNDKTNVSKK) is disordered.

The protein belongs to the radical SAM superfamily. RlmN family. [4Fe-4S] cluster is required as a cofactor.

It is found in the cytoplasm. The enzyme catalyses adenosine(2503) in 23S rRNA + 2 reduced [2Fe-2S]-[ferredoxin] + 2 S-adenosyl-L-methionine = 2-methyladenosine(2503) in 23S rRNA + 5'-deoxyadenosine + L-methionine + 2 oxidized [2Fe-2S]-[ferredoxin] + S-adenosyl-L-homocysteine. The catalysed reaction is adenosine(37) in tRNA + 2 reduced [2Fe-2S]-[ferredoxin] + 2 S-adenosyl-L-methionine = 2-methyladenosine(37) in tRNA + 5'-deoxyadenosine + L-methionine + 2 oxidized [2Fe-2S]-[ferredoxin] + S-adenosyl-L-homocysteine. Its function is as follows. Specifically methylates position 2 of adenine 2503 in 23S rRNA and position 2 of adenine 37 in tRNAs. m2A2503 modification seems to play a crucial role in the proofreading step occurring at the peptidyl transferase center and thus would serve to optimize ribosomal fidelity. In Campylobacter concisus (strain 13826), this protein is Dual-specificity RNA methyltransferase RlmN.